A 295-amino-acid chain; its full sequence is Transcription factor bHLH19 (295 aa).

Residues V115 to L164 form the bHLH domain.

As to quaternary structure, homodimer. As to expression, expressed in roots and leaves.

It localises to the nucleus. This Arabidopsis thaliana (Mouse-ear cress) protein is Transcription factor bHLH19 (BHLH19).